Reading from the N-terminus, the 80-residue chain is Large ribosomal subunit protein bL31B (80 aa).

This sequence belongs to the bacterial ribosomal protein bL31 family. Type B subfamily. Part of the 50S ribosomal subunit.

The polypeptide is Large ribosomal subunit protein bL31B (Methylobacillus flagellatus (strain ATCC 51484 / DSM 6875 / VKM B-1610 / KT)).